Here is a 293-residue protein sequence, read N- to C-terminus: Putative serine protease 42 (293 aa).

A signal peptide spans 1-26; sequence MSSGGGSRGLLAWLLLLQPWPGQNWA. Positions 33–60 are disordered; it reads LPSPLLSEEGGENPEASPAPGPEAGPPL. One can recognise a Peptidase S1 domain in the interval 80–293; the sequence is IVGGVDAEEG…IVSWGIGCGR (214 aa). An intrachain disulfide couples Cys105 to Cys121. His120 (charge relay system) is an active-site residue. Asn141 is a glycosylation site (N-linked (GlcNAc...) asparagine). Asp166 (charge relay system) is an active-site residue. N-linked (GlcNAc...) asparagine glycosylation occurs at Asn177. 3 disulfides stabilise this stretch: Cys200-Cys273, Cys232-Cys253, and Cys263-Cys291. Ser267 functions as the Charge relay system in the catalytic mechanism. The N-linked (GlcNAc...) asparagine glycan is linked to Asn276.

Belongs to the peptidase S1 family.

It localises to the cytoplasm. Its subcellular location is the cell membrane. Plays a role in spermatogenesis. Involved in germ cell survival during meiosis. This chain is Putative serine protease 42, found in Homo sapiens (Human).